We begin with the raw amino-acid sequence, 181 residues long: Oligoribonuclease (181 aa).

In terms of domain architecture, Exonuclease spans 8 to 171 (LIWVDLEMTG…DDIHDSIAEL (164 aa)). The active site involves tyrosine 129.

The protein belongs to the oligoribonuclease family.

Its subcellular location is the cytoplasm. Functionally, 3'-to-5' exoribonuclease specific for small oligoribonucleotides. This chain is Oligoribonuclease, found in Photobacterium profundum (strain SS9).